The chain runs to 147 residues: Cytochrome c oxidase subunit 3 (147 aa).

The next 4 membrane-spanning stretches (helical) occupy residues 13–33 (FQIPLLNTIILISSGVSVTWA), 48–68 (GLFITIILGIYFTILQAYEYF), 83–103 (FFMATGFHGLHVIIGTLFLLI), and 125–145 (AWYWHFVDVVWLFLYISIYWW).

The protein belongs to the cytochrome c oxidase subunit 3 family. In terms of assembly, component of the cytochrome c oxidase (complex IV, CIV), a multisubunit enzyme composed of a catalytic core of 3 subunits and several supernumerary subunits. The complex exists as a monomer or a dimer and forms supercomplexes (SCs) in the inner mitochondrial membrane with ubiquinol-cytochrome c oxidoreductase (cytochrome b-c1 complex, complex III, CIII).

It is found in the mitochondrion inner membrane. The catalysed reaction is 4 Fe(II)-[cytochrome c] + O2 + 8 H(+)(in) = 4 Fe(III)-[cytochrome c] + 2 H2O + 4 H(+)(out). Its function is as follows. Component of the cytochrome c oxidase, the last enzyme in the mitochondrial electron transport chain which drives oxidative phosphorylation. The respiratory chain contains 3 multisubunit complexes succinate dehydrogenase (complex II, CII), ubiquinol-cytochrome c oxidoreductase (cytochrome b-c1 complex, complex III, CIII) and cytochrome c oxidase (complex IV, CIV), that cooperate to transfer electrons derived from NADH and succinate to molecular oxygen, creating an electrochemical gradient over the inner membrane that drives transmembrane transport and the ATP synthase. Cytochrome c oxidase is the component of the respiratory chain that catalyzes the reduction of oxygen to water. Electrons originating from reduced cytochrome c in the intermembrane space (IMS) are transferred via the dinuclear copper A center (CU(A)) of subunit 2 and heme A of subunit 1 to the active site in subunit 1, a binuclear center (BNC) formed by heme A3 and copper B (CU(B)). The BNC reduces molecular oxygen to 2 water molecules using 4 electrons from cytochrome c in the IMS and 4 protons from the mitochondrial matrix. This Spodoptera frugiperda (Fall armyworm) protein is Cytochrome c oxidase subunit 3 (COIII).